The sequence spans 290 residues: GTPase Era (290 aa).

Positions 2-169 constitute an Era-type G domain; sequence KSGFVSIIGR…KDKIYENLNE (168 aa). The segment at 10 to 17 is G1; sequence GRPSTGKS. 10–17 lines the GTP pocket; it reads GRPSTGKS. The segment at 36–40 is G2; sequence QTTRN. Residues 57–60 are G3; it reads DTPG. GTP is bound by residues 57-61 and 119-122; these read DTPGF and NKID. The segment at 119 to 122 is G4; sequence NKID. The segment at 148 to 150 is G5; that stretch reads ISA. In terms of domain architecture, KH type-2 spans 200 to 276; sequence LKEELPYSIY…NLFLQVKLRK (77 aa).

The protein belongs to the TRAFAC class TrmE-Era-EngA-EngB-Septin-like GTPase superfamily. Era GTPase family. In terms of assembly, monomer.

The protein resides in the cytoplasm. It localises to the cell inner membrane. Its function is as follows. An essential GTPase that binds both GDP and GTP, with rapid nucleotide exchange. Plays a role in 16S rRNA processing and 30S ribosomal subunit biogenesis and possibly also in cell cycle regulation and energy metabolism. The polypeptide is GTPase Era (Borrelia duttonii (strain Ly)).